The primary structure comprises 421 residues: Cyclin-A2 (421 aa).

Position 1 is an N-acetylmethionine (Met1). The disordered stretch occupies residues 1–60 (MPGSSRQSGREAGSALLSLQQEDQENVNPEKAAPDQRARAALKTGNARGNAPQQRLKARR). Position 5 is a phosphoserine (Ser5).

This sequence belongs to the cyclin family. Cyclin AB subfamily. In terms of assembly, interacts with the CDK1 and CDK2 protein kinases to form serine/threonine kinase holoenzyme complexes. Interacts with CDK1 (hyperphosphorylated form in G1 and underphosphorylated forms in S and G2). Interacts with CDK2; the interaction increases from G1 to G2. Interacts (associated with CDK2 but not with CDK1) with SCAPER; regulates the activity of CCNA2/CDK2 by transiently maintaining CCNA2 in the cytoplasm. Forms a ternary complex with CDK2 and CDKN1B; CDKN1B inhibits the kinase activity of CDK2 through conformational rearrangements. Interacts with INCA1. Polyubiquitinated via 'Lys-11'-linked ubiquitin by the anaphase-promoting complex (APC/C), leading to its degradation by the proteasome. Deubiquitinated and stabilized by USP37 enables entry into S phase. Ubiquitinated during the G1 phase by the SCF(FBXO31) complex, leading to its proteasomal degradation.

The protein localises to the nucleus. It localises to the cytoplasm. Its function is as follows. Cyclin which controls both the G1/S and the G2/M transition phases of the cell cycle. Functions through the formation of specific serine/threonine kinase holoenzyme complexes with the cyclin-dependent protein kinases CDK1 and CDK2. The cyclin subunit confers the substrate specificity of these complexes and differentially interacts with and activates CDK1 and CDK2 throughout the cell cycle. This chain is Cyclin-A2, found in Mesocricetus auratus (Golden hamster).